We begin with the raw amino-acid sequence, 455 residues long: tRNA-2-methylthio-N(6)-dimethylallyladenosine synthase (455 aa).

Residues 3–117 form the MTTase N-terminal domain; it reads KGLYIESYGC…LPELIMKATR (115 aa). [4Fe-4S] cluster-binding residues include Cys-12, Cys-48, Cys-80, Cys-155, Cys-159, and Cys-162. Residues 141-375 enclose the Radical SAM core domain; it reads VSRGVSAFVS…LLTQQRLFTK (235 aa).

The protein belongs to the methylthiotransferase family. MiaB subfamily. In terms of assembly, monomer. [4Fe-4S] cluster serves as cofactor.

The protein localises to the cytoplasm. It carries out the reaction N(6)-dimethylallyladenosine(37) in tRNA + (sulfur carrier)-SH + AH2 + 2 S-adenosyl-L-methionine = 2-methylsulfanyl-N(6)-dimethylallyladenosine(37) in tRNA + (sulfur carrier)-H + 5'-deoxyadenosine + L-methionine + A + S-adenosyl-L-homocysteine + 2 H(+). Catalyzes the methylthiolation of N6-(dimethylallyl)adenosine (i(6)A), leading to the formation of 2-methylthio-N6-(dimethylallyl)adenosine (ms(2)i(6)A) at position 37 in tRNAs that read codons beginning with uridine. The polypeptide is tRNA-2-methylthio-N(6)-dimethylallyladenosine synthase (Anaplasma marginale (strain St. Maries)).